Here is a 70-residue protein sequence, read N- to C-terminus: DNA-directed RNA polymerase subunit omega (70 aa).

This sequence belongs to the RNA polymerase subunit omega family. In terms of assembly, the RNAP catalytic core consists of 2 alpha, 1 beta, 1 beta' and 1 omega subunit. When a sigma factor is associated with the core the holoenzyme is formed, which can initiate transcription.

The enzyme catalyses RNA(n) + a ribonucleoside 5'-triphosphate = RNA(n+1) + diphosphate. Functionally, promotes RNA polymerase assembly. Latches the N- and C-terminal regions of the beta' subunit thereby facilitating its interaction with the beta and alpha subunits. The chain is DNA-directed RNA polymerase subunit omega from Staphylococcus saprophyticus subsp. saprophyticus (strain ATCC 15305 / DSM 20229 / NCIMB 8711 / NCTC 7292 / S-41).